A 307-amino-acid polypeptide reads, in one-letter code: Sesquiterpene synthase-like protein Agr10 (307 aa).

A disordered region spans residues 287–307 (GRYFGDRGPENQSDIPTSSNR). Positions 296–307 (ENQSDIPTSSNR) are enriched in polar residues.

Belongs to the terpene synthase family.

The protein is Sesquiterpene synthase-like protein Agr10 of Cyclocybe aegerita (Black poplar mushroom).